The following is a 465-amino-acid chain: Gamma-aminobutyric acid receptor subunit rho-2 (465 aa).

Residues 1–20 (MPYFSRLILFLFCLVVLVES) form the signal peptide. Over 21–260 (RKPKKRRWTG…LYINFTLRRH (240 aa)) the chain is Extracellular. R105 is a binding site for 4-aminobutanoate. N120 is a glycosylation site (N-linked (GlcNAc...) asparagine). A 4-aminobutanoate-binding site is contributed by S169. Cysteines 178 and 192 form a disulfide. E197 is a binding site for 4-aminobutanoate. N254 carries N-linked (GlcNAc...) asparagine glycosylation. A helical membrane pass occupies residues 261–281 (IFFFLLQTYFPATLMVMLSWV). At 282-293 (SFWIDRRAVPAR) the chain is on the cytoplasmic side. Residues 294 to 314 (VSLGITTVLTMSTIITGVNAS) form a helical membrane-spanning segment. Residues 315–325 (MPRVSYIKAVD) are Extracellular-facing. A helical membrane pass occupies residues 326-346 (IYLWVSFVFVFLSVLEYAAVN). Residues 347-444 (YLTTVQERKE…FQNTHAIDKY (98 aa)) are Cytoplasmic-facing. A helical transmembrane segment spans residues 445–465 (SRLIFPASYIFFNLIYWSVFA).

Belongs to the ligand-gated ion channel (TC 1.A.9) family. Gamma-aminobutyric acid receptor (TC 1.A.9.5) subfamily. GABRR2 sub-subfamily. As to quaternary structure, three rho subunits (rho-1/GBRR1, rho-2/GBRR2 and rho-3/GBRR3) coassemble either to form functional homopentamers or heteropentamers. Rho-2 is unable to form a functional homopentamer. Interacts with SQSTM1.

The protein localises to the postsynaptic cell membrane. It localises to the cell membrane. It carries out the reaction chloride(in) = chloride(out). Functionally, rho subunit of the pentameric ligand-gated chloride channels responsible for mediating the effects of gamma-aminobutyric acid (GABA), the major inhibitory neurotransmitter in the brain. Rho-containing GABA-gated chloride channels are a subclass of GABA(A) receptors (GABAARs) entirely composed of rho subunits, where GABA molecules bind at the rho intersubunit interfaces. When activated by GABA, rho-GABAARs selectively allow the flow of chloride anions across the cell membrane down their electrochemical gradient. Rho-2 GABAARs may contribute to the regulation of glial development in the cerebellum by controlling extrasynaptic transmission. Rho-2 GABAARs are also involved in neuronal tonic (extrasynaptic) and phasic (synaptic) transmission in the Purkinje neurons of the cerebellum. Rho-2 GABAARs expressed in retina may play a role in retinal neurotransmission. This chain is Gamma-aminobutyric acid receptor subunit rho-2 (GABRR2), found in Bos taurus (Bovine).